Reading from the N-terminus, the 174-residue chain is Secretory-abundant heat soluble protein 2 (174 aa).

The first 19 residues, 1–19 (MHRFVLALVVFAGAAIVWA), serve as a signal peptide directing secretion. The interval 30–60 (EWTGKPWMGKWESDPSKDENVEEFKKKLQLP) is SAHS-c1. Residues 77–105 (YKKGDEYHHKIIINDAHYKNDIVFKLGQE) are SAHS-c2. The N-linked (GlcNAc...) asparagine glycan is linked to Asn111. Positions 118–172 (KYEDKDGALVGSVHYTGTKEQSLDKTINNVFKLEGDHLVKTSTIEGVTMKRHYNK) are SAHS-c3.

It belongs to the Secretory-abundant heat soluble protein (SAHS) family.

The protein resides in the secreted. Secreted heat soluble protein acting as a molecular shield in water-deficient condition. Tardigrade-specific intrinsically disordered proteins (TDPs) are essential for desiccation tolerance by forming non-crystalline amorphous solids upon desiccation, and this vitrified state mirrors their protective capabilities. The polypeptide is Secretory-abundant heat soluble protein 2 (Ramazzottius varieornatus (Water bear)).